A 366-amino-acid chain; its full sequence is Chorismate synthase (366 aa).

NADP(+) is bound by residues R48 and R54. FMN is bound by residues 125 to 127 (RSS), 238 to 239 (NA), G278, 293 to 297 (KPTSS), and R319.

The protein belongs to the chorismate synthase family. In terms of assembly, homotetramer. Requires FMNH2 as cofactor.

It carries out the reaction 5-O-(1-carboxyvinyl)-3-phosphoshikimate = chorismate + phosphate. It functions in the pathway metabolic intermediate biosynthesis; chorismate biosynthesis; chorismate from D-erythrose 4-phosphate and phosphoenolpyruvate: step 7/7. Catalyzes the anti-1,4-elimination of the C-3 phosphate and the C-6 proR hydrogen from 5-enolpyruvylshikimate-3-phosphate (EPSP) to yield chorismate, which is the branch point compound that serves as the starting substrate for the three terminal pathways of aromatic amino acid biosynthesis. This reaction introduces a second double bond into the aromatic ring system. This is Chorismate synthase from Ralstonia nicotianae (strain ATCC BAA-1114 / GMI1000) (Ralstonia solanacearum).